Reading from the N-terminus, the 4391-residue chain is Basement membrane-specific heparan sulfate proteoglycan core protein (4391 aa).

The N-terminal stretch at 1–21 (MGWRAAGALLLALLLHGRLLA) is a signal peptide. An O-linked (GalNAc...) threonine glycan is attached at Thr42. O-linked (Xyl...) (heparan sulfate) serine glycosylation is found at Ser65, Ser71, and Ser76. In terms of domain architecture, SEA spans 80-191 (QMVYFRALVN…QGFQFRRLGT (112 aa)). A glycan (N-linked (GlcNAc...) asparagine) is linked at Asn89. LDL-receptor class A domains lie at 198 to 235 (ACTE…LNCE), 284 to 320 (PCGP…LDCG), 324 to 360 (PCEP…ANCP), and 367 to 404 (VCGP…FGCM). 12 disulfide bridges follow: Cys199–Cys212, Cys206–Cys225, Cys219–Cys234, Cys285–Cys297, Cys292–Cys310, Cys304–Cys319, Cys325–Cys337, Cys332–Cys350, Cys344–Cys359, Cys368–Cys381, Cys375–Cys394, and Cys388–Cys403. One can recognise an Ig-like C2-type 1 domain in the interval 405-504 (PPQVVTPPRE…VLELVPQRGP (100 aa)). Residues 521–530 (CFCFGITSVC) form the Laminin EGF-like 1; first part domain. Positions 538-730 (DQIRLRFDQP…SHGRAHSVEE (193 aa)) constitute a Laminin IV type A 1 domain. N-linked (GlcNAc...) asparagine glycosylation occurs at Asn554. Positions 731 to 763 (CRCPIGYSGLSCESCDAHFTRVPGGPYLGTCSG) constitute a Laminin EGF-like 1; second part domain. Intrachain disulfides connect Cys764–Cys773, Cys766–Cys780, Cys783–Cys792, Cys795–Cys811, Cys814–Cys829, Cys816–Cys839, Cys842–Cys851, Cys854–Cys869, Cys879–Cys892, Cys894–Cys903, and Cys906–Cys921. 2 Laminin EGF-like domains span residues 764–813 (CNCN…SCRP) and 814–871 (CPCP…KCRP). The Laminin EGF-like 4; truncated domain maps to 879–923 (CDERGSMGTSGEACRCKNNVVGRLCNECADGSFHLSTRNPDGCLK). The 10-residue stretch at 924–933 (CFCMGVSRHC) folds into the Laminin EGF-like 5; first part domain. Residues 941–1125 (AQLHGASEEP…GQDPALEVEQ (185 aa)) form the Laminin IV type A 2 domain. One can recognise a Laminin EGF-like 5; second part domain in the interval 1126–1158 (CSCPPGYRGPSCQDCDTGYTRTPSGLYLGTCER). 12 disulfide bridges follow: Cys1159–Cys1168, Cys1161–Cys1175, Cys1178–Cys1187, Cys1190–Cys1206, Cys1209–Cys1224, Cys1211–Cys1234, Cys1237–Cys1246, Cys1249–Cys1263, Cys1275–Cys1287, Cys1277–Cys1293, Cys1295–Cys1304, and Cys1307–Cys1322. Laminin EGF-like domains follow at residues 1159-1208 (CSCH…DCQL), 1209-1265 (CPCY…PCQR), and 1275-1324 (CNCD…GCLP). The region spanning 1325 to 1334 (CFCMGITQQC) is the Laminin EGF-like 9; first part domain. Residues 1344 to 1529 (ISTHFAPGDF…NRPRALEVEE (186 aa)) enclose the Laminin IV type A 3 domain. The region spanning 1530 to 1562 (CRCPPGYIGLSCQDCAPGYTRTGSGLYLGHCEL) is the Laminin EGF-like 9; second part domain. 8 cysteine pairs are disulfide-bonded: Cys1563/Cys1572, Cys1565/Cys1579, Cys1582/Cys1591, Cys1594/Cys1610, Cys1613/Cys1628, Cys1615/Cys1638, Cys1641/Cys1650, and Cys1653/Cys1668. 2 Laminin EGF-like domains span residues 1563 to 1612 (CECN…DCQP) and 1613 to 1670 (CACP…QCLP). Ig-like C2-type domains lie at 1677–1771 (LVVE…SKPI), 1772–1865 (TVTV…TLSA), 1866–1955 (PVVS…GGGG), 1956–2051 (PRVQ…ASPP), 2052–2151 (PVKI…PGST), 2152–2244 (RPIR…PGPI), 2245–2340 (PPVR…AGST), 2341–2436 (QPIR…LGVT), 2437–2533 (PTVR…QGVA), 2534–2629 (YPVR…PSVS), 2630–2726 (PPIR…PGSS), 2727–2826 (MPIR…PGGA), 2827–2924 (PPIR…PGLA), 2925–3021 (QPIY…RLRS), 3022–3112 (PVIS…HGPP), 3113–3211 (TVSV…APGA), 3212–3298 (PQVQ…VESP), 3299–3399 (PYAT…AGST), 3400–3488 (PTVQ…ALPS), 3489–3574 (VLIN…LVQA), and 3575–3662 (LPQI…PERV). Residue Asn1755 is glycosylated (N-linked (GlcNAc...) asparagine). An N-linked (GlcNAc...) asparagine glycan is attached at Asn2121. A disordered region spans residues 2994 to 3014 (ASGPGPEQEASFTVTVPPSEG). An O-linked (Xyl...) (chondroitin sulfate) serine glycan is attached at Ser2995. Over residues 3003–3014 (ASFTVTVPPSEG) the composition is skewed to polar residues. Asn3072 and Asn3105 each carry an N-linked (GlcNAc...) asparagine glycan. A glycan (N-linked (GlcNAc...) asparagine) is linked at Asn3279. Residues 3663 to 3843 (VPYFTQTPYS…DLNLTAHGIS (181 aa)) enclose the Laminin G-like 1 domain. N-linked (GlcNAc...) asparagine glycans are attached at residues Asn3780 and Asn3836. 7 disulfide bridges follow: Cys3819–Cys3845, Cys3848–Cys3859, Cys3853–Cys3869, Cys3871–Cys3880, Cys3888–Cys3899, Cys3893–Cys3910, and Cys3912–Cys3921. 2 EGF-like domains span residues 3844–3881 (HCPT…SRCE) and 3884–3922 (QALH…LRCE). Positions 3928–4103 (TTPSLSGAGS…LGSQGIGQCY (176 aa)) constitute a Laminin G-like 2 domain. A glycan (O-linked (Xyl...) (chondroitin sulfate) serine) is linked at Ser3933. Asn4068 carries an N-linked (GlcNAc...) asparagine glycan. 7 cysteine pairs are disulfide-bonded: Cys4076-Cys4102, Cys4108-Cys4119, Cys4113-Cys4129, Cys4131-Cys4140, Cys4147-Cys4159, Cys4153-Cys4164, and Cys4166-Cys4175. 2 consecutive EGF-like domains span residues 4104 to 4141 (DSSP…DLCE) and 4143 to 4176 (EENP…PRCQ). Residues 4149–4151 (LRE) are mediates motor neuron attachment. O-linked (Xyl...) (chondroitin sulfate) serine glycosylation is found at Ser4179 and Ser4193. One can recognise a Laminin G-like 3 domain in the interval 4201 to 4389 (QYGAYFHDDG…AQAGANTRPC (189 aa)). Ca(2+) is bound by residues Asp4258 and Leu4275. The tract at residues 4299 to 4301 (LRE) is mediates motor neuron attachment. Ala4325 and Asn4327 together coordinate Ca(2+). Residues Cys4355 and Cys4389 are joined by a disulfide bond. Residues 4364 to 4391 (ARPGAPPPQPLDLQHRAQAGANTRPCPS) are disordered.

As to quaternary structure, has a strong tendency to aggregate in dimers or stellate structures. Interacts with other basement membrane components such as laminin, prolargin and collagen type IV. Interacts with COL13A1. Interacts with FGFBP1. Interacts with VWA1. Interacts (via C-terminus) with ECM1 (via C-terminus). Interacts with SVEP1. Proteolytic processing produces the C-terminal angiogenic peptide, endorepellin. This peptide can be further processed to produce the LG3 peptide. In terms of processing, O-glycosylated with core 1 or possibly core 8 glycans. Contains three heparan sulfate chains. Also contains chondroitin sulfate. Detected in cerebrospinal fluid, fibroblasts and urine (at protein level).

Its subcellular location is the secreted. The protein localises to the extracellular space. The protein resides in the extracellular matrix. It localises to the basement membrane. Its function is as follows. Integral component of basement membranes. Component of the glomerular basement membrane (GBM), responsible for the fixed negative electrostatic membrane charge, and which provides a barrier which is both size- and charge-selective. It serves as an attachment substrate for cells. Plays essential roles in vascularization. Critical for normal heart development and for regulating the vascular response to injury. Also required for avascular cartilage development. Functionally, anti-angiogenic and anti-tumor peptide that inhibits endothelial cell migration, collagen-induced endothelial tube morphogenesis and blood vessel growth in the chorioallantoic membrane. Blocks endothelial cell adhesion to fibronectin and type I collagen. Anti-tumor agent in neovascularization. Interaction with its ligand, integrin alpha2/beta1, is required for the anti-angiogenic properties. Evokes a reduction in phosphorylation of receptor tyrosine kinases via alpha2/beta1 integrin-mediated activation of the tyrosine phosphatase, PTPN6. Has anti-angiogenic properties that require binding of calcium ions for full activity. This chain is Basement membrane-specific heparan sulfate proteoglycan core protein (HSPG2), found in Homo sapiens (Human).